The chain runs to 256 residues: Small ribosomal subunit protein uS3 (256 aa).

The 73-residue stretch at 39 to 111 folds into the KH type-2 domain; it reads IREFLNENFS…EVILNIIEVR (73 aa). Residues 219-256 are disordered; that stretch reads DTRKPFEAGNQKRGQKRRPRNDQPGQRPQQRNRNSKED. Residues 240-250 are compositionally biased toward low complexity; that stretch reads DQPGQRPQQRN.

The protein belongs to the universal ribosomal protein uS3 family. In terms of assembly, part of the 30S ribosomal subunit. Forms a tight complex with proteins S10 and S14.

Binds the lower part of the 30S subunit head. Binds mRNA in the 70S ribosome, positioning it for translation. This chain is Small ribosomal subunit protein uS3, found in Acholeplasma laidlawii (strain PG-8A).